The following is a 303-amino-acid chain: Centromere protein O (303 aa).

Positions 38–77 form a coiled coil; sequence AALRKNQELVLELRKKRDELKAKIERHKAEIQAFRGREEA.

This sequence belongs to the CENP-O/MCM21 family.

It is found in the nucleus. The protein resides in the chromosome. Its subcellular location is the centromere. Probable component of a centromeric complex involved in assembly of kinetochore proteins, mitotic progression and chromosome segregation. The protein is Centromere protein O (cenpo) of Xenopus tropicalis (Western clawed frog).